A 618-amino-acid chain; its full sequence is Nuclear RNA export factor 1 (618 aa).

Positions 1 to 15 (MADEGKSYNEHDDRV) are enriched in basic and acidic residues. Residues 1–113 (MADEGKSYNE…RGGAGTSQDG (113 aa)) form a disordered region. N-acetylalanine is present on A2. Residues 2–59 (ADEGKSYNEHDDRVSFPQRRKKGRGPFRWKCGVGNRRSGRGGSGIRSSRFEEDDGDVA) are minor non-specific RNA-binding. Residues 2-117 (ADEGKSYNEH…GTSQDGTTKN (116 aa)) are RNA-binding (RBD). Residues 2-197 (ADEGKSYNEH…IIINSSAPPY (196 aa)) are interaction with ALYREF/THOC4 and LUZP4. A compositionally biased stretch (basic residues) spans 19-28 (QRRKKGRGPF). R41 is modified (asymmetric dimethylarginine; alternate). Omega-N-methylarginine; alternate is present on R41. A major non-specific RNA-binding region spans residues 60–117 (MNDPQDGPRVRFNPYTTRPNRRRDTWHDRDRIHVTVRRDRAPQERGGAGTSQDGTTKN). The interval 60-117 (MNDPQDGPRVRFNPYTTRPNRRRDTWHDRDRIHVTVRRDRAPQERGGAGTSQDGTTKN) is RNA binding. Residues 66–99 (GPRVRFNPYTTRPNRRRDTWHDRDRIHVTVRRDR) carry the Nuclear localization signal motif. Positions 81 to 102 (RRDTWHDRDRIHVTVRRDRAPQ) are enriched in basic and acidic residues. A Nuclear export signal motif is present at residues 82 to 109 (RDTWHDRDRIHVTVRRDRAPQERGGAGT). The RRM domain maps to 118-197 (WFKITIPYGK…IIINSSAPPY (80 aa)). The residue at position 125 (Y125) is a 3'-nitrotyrosine. LRR repeat units follow at residues 265–290 (ELLSLNLSNNRLYKLDDMSSIVQKAP), 291–314 (NLKILNLSGNELKSEWELDKIKGL), 315–342 (KLEELWLDRNPMCDTFLDQSTYISTIRE), and 343–370 (RFPKLLRLDGHELPPPIAFDVEAPTMLP). The 151-residue stretch at 385–535 (LVLHFLQQYY…LCIVNDELFV (151 aa)) folds into the NTF2 domain. In terms of domain architecture, TAP-C spans 564–618 (QEQQDMLQAFSTQSGMNLEWSQKCLQDNNWDYTRSAQAFTHLKAKGEIPEVAFMK).

This sequence belongs to the NXF family. As to quaternary structure, heterodimer (via NTF2 domain) with NXT1. The formation of NXF1-NXT1 heterodimers is required for the NXF1-mediated nuclear mRNA export. Forms a complex with RANBP2/NUP358, NXT1 and RANGAP1. Associates with the exon junction complex (EJC). Associates with the transcription/export (TREX) complex. Found in a mRNA complex with UPF3A and UPF3B. Found in a post-splicing complex with RBM8A, UPF1, UPF2, UPF3A, UPF3B and RNPS1. Interacts (via N-terminus) with DHX9 (via N-terminus); this interaction is direct and negatively regulates NXF1-mediated nuclear export of constitutive transport element (CTE)-containing cellular mRNAs. Interacts with FYTTD1/UIF. Interacts with EIF4A3. Interacts with NUP42. Interacts with ALYREF/THOC4. Interacts with CHTOP. Interacts with FRG1 (via N-terminus). Interacts with LUZP4. Interacts with FMR1; the interaction occurs in a mRNA-dependent and polyribosomes-independent manner in the nucleus. Interacts with CPSF6 (via N-terminus); this interaction is direct. Interacts with RBM15. Interacts with RBM15B. Interacts with MCM3AP; this interaction is not mediated by RNA. Interacts with DDX3X (via C-terminus); this interaction may be partly involved in DDX3X nuclear export and in NXF1 localization to stress granules. Interacts with PABPC1/PABP1.

It localises to the nucleus. The protein resides in the nucleoplasm. The protein localises to the nucleus speckle. It is found in the nuclear pore complex. Its subcellular location is the nucleus envelope. It localises to the cytoplasm. The protein resides in the stress granule. Functionally, involved in the nuclear export of mRNA species bearing retroviral constitutive transport elements (CTE) and in the export of mRNA from the nucleus to the cytoplasm (TAP/NFX1 pathway). The NXF1-NXT1 heterodimer is involved in the export of HSP70 mRNA in conjunction with ALYREF/THOC4 and THOC5 components of the TREX complex. ALYREF/THOC4-bound mRNA is thought to be transferred to the NXF1-NXT1 heterodimer for export. Also involved in nuclear export of m6A-containing mRNAs: interaction between SRSF3 and YTHDC1 facilitates m6A-containing mRNA-binding to both SRSF3 and NXF1, promoting mRNA nuclear export. The protein is Nuclear RNA export factor 1 (Nxf1) of Rattus norvegicus (Rat).